The sequence spans 262 residues: 3-methyl-2-oxobutanoate hydroxymethyltransferase (262 aa).

Mg(2+) contacts are provided by Asp-31 and Asp-70. Residues 31-32 (DS), Asp-70, and Lys-99 each bind 3-methyl-2-oxobutanoate. Glu-101 contributes to the Mg(2+) binding site. Glu-168 functions as the Proton acceptor in the catalytic mechanism.

It belongs to the PanB family. Homodecamer; pentamer of dimers. The cofactor is Mg(2+).

It localises to the cytoplasm. The enzyme catalyses 3-methyl-2-oxobutanoate + (6R)-5,10-methylene-5,6,7,8-tetrahydrofolate + H2O = 2-dehydropantoate + (6S)-5,6,7,8-tetrahydrofolate. Its pathway is cofactor biosynthesis; coenzyme A biosynthesis. Its function is as follows. Catalyzes the reversible reaction in which hydroxymethyl group from 5,10-methylenetetrahydrofolate is transferred onto alpha-ketoisovalerate to form ketopantoate. This is 3-methyl-2-oxobutanoate hydroxymethyltransferase from Cenarchaeum symbiosum (strain A).